Consider the following 169-residue polypeptide: Peptide deformylase (169 aa).

C91 and H133 together coordinate Fe cation. Residue E134 is part of the active site. H137 provides a ligand contact to Fe cation.

It belongs to the polypeptide deformylase family. It depends on Fe(2+) as a cofactor.

The enzyme catalyses N-terminal N-formyl-L-methionyl-[peptide] + H2O = N-terminal L-methionyl-[peptide] + formate. In terms of biological role, removes the formyl group from the N-terminal Met of newly synthesized proteins. Requires at least a dipeptide for an efficient rate of reaction. N-terminal L-methionine is a prerequisite for activity but the enzyme has broad specificity at other positions. This Haemophilus influenzae (strain 86-028NP) protein is Peptide deformylase.